The primary structure comprises 151 residues: Deoxyuridine 5'-triphosphate nucleotidohydrolase (151 aa).

Residues R70–G72, N83, L87–D89, and M97 each bind substrate.

The protein belongs to the dUTPase family. The cofactor is Mg(2+).

It catalyses the reaction dUTP + H2O = dUMP + diphosphate + H(+). It functions in the pathway pyrimidine metabolism; dUMP biosynthesis; dUMP from dCTP (dUTP route): step 2/2. Its function is as follows. This enzyme is involved in nucleotide metabolism: it produces dUMP, the immediate precursor of thymidine nucleotides and it decreases the intracellular concentration of dUTP so that uracil cannot be incorporated into DNA. This chain is Deoxyuridine 5'-triphosphate nucleotidohydrolase, found in Actinobacillus pleuropneumoniae serotype 5b (strain L20).